The chain runs to 161 residues: Phosphopantetheine adenylyltransferase (161 aa).

Position 9 (Thr9) interacts with substrate. Residues 9 to 10 (TF) and His17 contribute to the ATP site. Residues Lys41, Leu73, and Arg87 each coordinate substrate. Residues 88–90 (GLR), Glu98, and 123–129 (YQFISGT) contribute to the ATP site.

The protein belongs to the bacterial CoaD family. In terms of assembly, homohexamer. The cofactor is Mg(2+).

Its subcellular location is the cytoplasm. The catalysed reaction is (R)-4'-phosphopantetheine + ATP + H(+) = 3'-dephospho-CoA + diphosphate. Its pathway is cofactor biosynthesis; coenzyme A biosynthesis; CoA from (R)-pantothenate: step 4/5. Functionally, reversibly transfers an adenylyl group from ATP to 4'-phosphopantetheine, yielding dephospho-CoA (dPCoA) and pyrophosphate. The protein is Phosphopantetheine adenylyltransferase of Cupriavidus metallidurans (strain ATCC 43123 / DSM 2839 / NBRC 102507 / CH34) (Ralstonia metallidurans).